Reading from the N-terminus, the 347-residue chain is Phenylalanine--tRNA ligase alpha subunit (347 aa).

Position 265 (Glu-265) interacts with Mg(2+).

Belongs to the class-II aminoacyl-tRNA synthetase family. Phe-tRNA synthetase alpha subunit type 1 subfamily. As to quaternary structure, tetramer of two alpha and two beta subunits. Requires Mg(2+) as cofactor.

Its subcellular location is the cytoplasm. It carries out the reaction tRNA(Phe) + L-phenylalanine + ATP = L-phenylalanyl-tRNA(Phe) + AMP + diphosphate + H(+). This is Phenylalanine--tRNA ligase alpha subunit from Wolbachia pipientis subsp. Culex pipiens (strain wPip).